Reading from the N-terminus, the 467-residue chain is 55 kDa erythrocyte membrane protein (467 aa).

The PDZ domain occupies glutamate 73–proline 154. The region spanning proline 160–alanine 230 is the SH3 domain. The 170-residue stretch at arginine 283 to glutamate 452 folds into the Guanylate kinase-like domain.

This sequence belongs to the MAGUK family. Post-translationally, extensively palmitoylated.

The protein localises to the membrane. Its function is as follows. May play a role in the regulation of neutrophil polarization. The chain is 55 kDa erythrocyte membrane protein (mpp1) from Takifugu rubripes (Japanese pufferfish).